We begin with the raw amino-acid sequence, 206 residues long: Ras-related protein Rab-18 (206 aa).

Methionine 1 carries the N-acetylmethionine modification. The GTP site is built by serine 17, glycine 20, lysine 21, serine 22, serine 23, aspartate 34, proline 35, threonine 40, glycine 66, lysine 123, and aspartate 125. Serine 22 contacts Mg(2+). 2 short sequence motifs (switch) span residues 31–45 (DTFD…GVDF) and 63–80 (DTAG…YYRG). Mg(2+) is bound at residue threonine 40. Phosphoserine is present on serine 144. GTP is bound at residue alanine 152. Cysteine 199 carries the S-palmitoyl cysteine lipid modification. Residue cysteine 203 is modified to Cysteine methyl ester. Residue cysteine 203 is the site of S-geranylgeranyl cysteine attachment. A propeptide spans 204–206 (SVL) (removed in mature form).

This sequence belongs to the small GTPase superfamily. Rab family. As to quaternary structure, interacts (in GTP-bound form) with ZFYVE1. Interacts with ZW10 and this interaction is enhanced in the presence of ZFYVE1. Interacts with BSCL2. The cofactor is Mg(2+). In terms of tissue distribution, expression is high in the brain, moderate in the pituitary, and low in the liver. Detected in all tissues. Highly enriched on apical endocytic structures in polarized epithelial cells of kidney proximal tubules. Detected on both the apical and basolateral domains in epithelial cells of the intestine.

It localises to the endoplasmic reticulum membrane. The protein localises to the golgi apparatus. Its subcellular location is the cis-Golgi network membrane. It is found in the lipid droplet. The protein resides in the apical cell membrane. The catalysed reaction is GTP + H2O = GDP + phosphate + H(+). Regulated by guanine nucleotide exchange factor (GEF) RAB3GAP1-RAB3GAP2 complex at the cis-Golgi membrane which promotes the exchange of bound GDP for free GTP. Regulated by GTPase activating protein (GAP) TBC1D20 at the ER membrane which increases the GTP hydrolysis activity. Inhibited by GDP dissociation inhibitors (GDIs) which prevent Rab-GDP dissociation. Functionally, the small GTPases Rab are key regulators of intracellular membrane trafficking, from the formation of transport vesicles to their fusion with membranes. Rabs cycle between an inactive GDP-bound form and an active GTP-bound form that is able to recruit to membranes different sets of downstream effectors directly responsible for vesicle formation, movement, tethering and fusion. RAB18 is required for the localization of ZFYVE1 to lipid droplets and for its function in mediating the formation of endoplasmic reticulum-lipid droplets (ER-LD) contacts. Also required for maintaining endoplasmic reticulum structure. Plays a role in apical endocytosis/recycling. Plays a key role in eye and brain development and neurodegeneration. This Mus musculus (Mouse) protein is Ras-related protein Rab-18.